A 245-amino-acid chain; its full sequence is Eukaryotic translation initiation factor 4E type 2 (245 aa).

Positions 1 to 38 (MNNKFDALKDDDSGDHDQNEENSTQKDGEKEKTDRDKS) are enriched in basic and acidic residues. Residues 1 to 52 (MNNKFDALKDDDSGDHDQNEENSTQKDGEKEKTDRDKSQSSGKRKAVVPGPA) form a disordered region. Ser13 carries the phosphoserine modification. The interval 54–57 (HPLQ) is EIF4EBP1/2/3 binding. 78–79 (YE) contributes to the mRNA binding site. Positions 95-99 (WKFYS) are EIF4EBP1/2/3 binding. Residues His110 and 124-125 (WE) each bind mRNA. Residue Lys134 is modified to N6-acetyllysine; alternate. A Glycyl lysine isopeptide (Lys-Gly) (interchain with G-Cter in ISG15); alternate cross-link involves residue Lys134. The segment at 150 to 157 (NLILAMLG) is EIF4EBP1/2/3 binding. MRNA is bound by residues 174 to 179 (RFQEDI) and 222 to 224 (KMP). Lys222 is covalently cross-linked (Glycyl lysine isopeptide (Lys-Gly) (interchain with G-Cter in ISG15)).

It belongs to the eukaryotic initiation factor 4E family. As to quaternary structure, interacts with EIF4EBP1, EIF4EBP2 and EIF4EBP3. Does not interact with eIF4G (EIF4G1, EIF4G2 or EIF4G3). Component of the 4EHP-GYF2 complex, at least composed of EIF4E2, GIGYF2 and ZNF598. Interacts with GIGYF2 (via the 4EHP-binding motif); the interaction is direct. Interacts with EIF4ENIF1/4E-T (via YXXXXLphi motif); increasing affinity for the 7-methylguanosine-containing mRNA cap. In terms of processing, ubiquitinated by ARIH1. The consequences of ubiquitination are however unclear: according to a report, EIF4E2 ubiquitination leads to promote EIF4E2 cap-binding and protein translation arrest. According to another report ubiquitination leads to its subsequent degradation. ISGylation enhances its cap structure-binding activity and translation-inhibition activity. Widely expressed with highest levels in testis, kidney and liver.

The protein resides in the cytoplasm. It localises to the P-body. Its function is as follows. Recognizes and binds the 7-methylguanosine-containing mRNA cap during an early step in the initiation. Acts as a repressor of translation initiation. In contrast to EIF4E, it is unable to bind eIF4G (EIF4G1, EIF4G2 or EIF4G3), suggesting that it acts by competing with EIF4E and block assembly of eIF4F at the cap. In P-bodies, component of a complex that promotes miRNA-mediated translational repression. Involved in virus-induced host response by mediating miRNA MIR34A-induced translational silencing which controls IFNB1 production by a negative feedback mechanism. In terms of biological role, component of the 4EHP-GYF2 complex, a multiprotein complex that acts as a repressor of translation initiation. In association with GIGYF2, assists ribosome-associated quality control (RQC) by sequestering the mRNA cap, blocking ribosome initiation and decreasing the translational load on problematic messages. Part of a pathway that works in parallel to RQC-mediated degradation of the stalled nascent polypeptide. GIGYF2 and EIF4E2 work downstream and independently of ZNF598, which seems to work as a scaffold that can recruit them to faulty mRNA even if alternative recruitment mechanisms may exist. This is Eukaryotic translation initiation factor 4E type 2 from Mus musculus (Mouse).